The primary structure comprises 637 residues: Protein arginine N-methyltransferase 5 (637 aa).

Alanine 2 carries the N-acetylalanine modification. Residues 13 to 292 are TIM barrel; it reads RVSSGRDLNC…YLEYLSQNRP (280 aa). The region spanning 308 to 615 is the SAM-dependent MTase PRMT-type domain; sequence LQSPLQPLMD…SNSKKVWYEW (308 aa). Tyrosine 324 contacts S-adenosyl-L-methionine. A protein is bound at residue phenylalanine 327. Residues 333 to 334, glutamate 392, and 419 to 420 contribute to the S-adenosyl-L-methionine site; these read KY and DM. Glutamate 435 and glutamate 444 together coordinate a protein. Residues glutamate 435 and glutamate 444 each act as proton donor/acceptor in the active site. Residues 465 to 637 are beta barrel; sequence PGEYTSFLAP…PTGRSYTIGL (173 aa). The tract at residues 488–494 is dimerization; sequence REKDRDP.

Belongs to the class I-like SAM-binding methyltransferase superfamily. Protein arginine N-methyltransferase family. Forms, at least, homodimers and homotetramers. Component of the methylosome complex, composed of PRMT5, WDR77 and CLNS1A. Found in a complex composed of PRMT5, WDR77 and RIOK1. RIOK1 and CLNS1A associate with PRMT5 in a mutually exclusive fashion, which allows the recruitment of distinct methylation substrates, such as nucleolin/NCL and Sm proteins, respectively. Interacts with PRDM1. Identified in a complex composed of methylosome and PRMT1 and ERH. Interacts with EGFR; methylates EGFR and stimulates EGFR-mediated ERK activation. Interacts with HOXA9. Interacts with SRGAP2. Found in a complex with COPRS, RUNX1 and CBFB. Interacts with CHTOP; the interaction symmetrically methylates CHTOP, but seems to require the presence of PRMT1. Interacts with EPB41L3; this modulates methylation of target proteins. Component of a high molecular weight E2F-pocket protein complex, CERC (cyclin E1 repressor complex). Associates with SWI/SNF remodeling complexes containing SMARCA2 and SMARCA4. Interacts with JAK2, SSTR1, SUPT5H, BRAF and with active RAF1. Interacts with LSM11, PRMT7 and SNRPD3. Interacts with COPRS; promoting its recruitment on histone H4. Interacts with CLNS1A/pICln. Identified in a complex with CLNS1A/pICln and Sm proteins. Interacts with RPS10. Interacts with WDR77. Interacts with IWS1. Interacts with CRY1. Interacts with POLR2A. Interacts with SMN1/SMN2. Interacts with LYAR; this interaction is direct. Interacts with TTC5/STRAP; this interaction is DNA damage-dependent and promotes PRMT5 interaction with p53/TP53. Interacts with p53/TP53 in response to DNA damage; the interaction is TTC5/STRAP dependent. Interacts with FAM47E; the interaction is direct, promotes PRMT5 localization to chromatin, and does not disrupt its association with WDR77 or STUB1. Interacts with TDRD6. Interacts with STUB1. Interacts with MBD2. Does not interact with MBD3.

It is found in the cytoplasm. It localises to the nucleus. The protein resides in the golgi apparatus. It catalyses the reaction L-arginyl-[protein] + 2 S-adenosyl-L-methionine = N(omega),N(omega)'-dimethyl-L-arginyl-[protein] + 2 S-adenosyl-L-homocysteine + 2 H(+). Activity is increased by EGF, HGF, FGF1 or FGF2 treatments, and slightly decreased by NGF treatment. In terms of biological role, arginine methyltransferase that can both catalyze the formation of omega-N monomethylarginine (MMA) and symmetrical dimethylarginine (sDMA), with a preference for the formation of MMA. Specifically mediates the symmetrical dimethylation of arginine residues in the small nuclear ribonucleoproteins Sm D1 (SNRPD1) and Sm D3 (SNRPD3); such methylation being required for the assembly and biogenesis of snRNP core particles. Methylates SUPT5H and may regulate its transcriptional elongation properties. May methylate the N-terminal region of MBD2. Mono- and dimethylates arginine residues of myelin basic protein (MBP) in vitro. May play a role in cytokine-activated transduction pathways. Negatively regulates cyclin E1 promoter activity and cellular proliferation. Methylates histone H2A and H4 'Arg-3' during germ cell development. Methylates histone H3 'Arg-8', which may repress transcription. Methylates the Piwi proteins (PIWIL1, PIWIL2 and PIWIL4), methylation of Piwi proteins being required for the interaction with Tudor domain-containing proteins and subsequent localization to the meiotic nuage. Methylates RPS10. Attenuates EGF signaling through the MAPK1/MAPK3 pathway acting at 2 levels. First, monomethylates EGFR; this enhances EGFR 'Tyr-1197' phosphorylation and PTPN6 recruitment, eventually leading to reduced SOS1 phosphorylation. Second, methylates RAF1 and probably BRAF, hence destabilizing these 2 signaling proteins and reducing their catalytic activity. Required for induction of E-selectin and VCAM-1, on the endothelial cells surface at sites of inflammation. Methylates HOXA9. Methylates and regulates SRGAP2 which is involved in cell migration and differentiation. Acts as a transcriptional corepressor in CRY1-mediated repression of the core circadian component PER1 by regulating the H4R3 dimethylation at the PER1 promoter. Methylates GM130/GOLGA2, regulating Golgi ribbon formation. Methylates H4R3 in genes involved in glioblastomagenesis in a CHTOP- and/or TET1-dependent manner. Symmetrically methylates POLR2A, a modification that allows the recruitment to POLR2A of proteins including SMN1/SMN2 and SETX. This is required for resolving RNA-DNA hybrids created by RNA polymerase II, that form R-loop in transcription terminal regions, an important step in proper transcription termination. Along with LYAR, binds the promoter of gamma-globin HBG1/HBG2 and represses its expression. Symmetrically methylates NCL. Methylates p53/TP53; methylation might possibly affect p53/TP53 target gene specificity. Involved in spliceosome maturation and mRNA splicing in prophase I spermatocytes through the catalysis of the symmetrical arginine dimethylation of SNRPB (small nuclear ribonucleoprotein-associated protein) and the interaction with tudor domain-containing protein TDRD6. The chain is Protein arginine N-methyltransferase 5 (Prmt5) from Mus musculus (Mouse).